We begin with the raw amino-acid sequence, 281 residues long: Energy-coupling factor transporter ATP-binding protein EcfA1 (281 aa).

Residues 6–245 enclose the ABC transporter domain; it reads IKSEDLVFKY…VEKIKSIGLD (240 aa). ATP is bound at residue 44–51; sequence GHNGSGKS.

It belongs to the ABC transporter superfamily. Energy-coupling factor EcfA family. As to quaternary structure, forms a stable energy-coupling factor (ECF) transporter complex composed of 2 membrane-embedded substrate-binding proteins (S component), 2 ATP-binding proteins (A component) and 2 transmembrane proteins (T component).

It is found in the cell membrane. Its function is as follows. ATP-binding (A) component of a common energy-coupling factor (ECF) ABC-transporter complex. Unlike classic ABC transporters this ECF transporter provides the energy necessary to transport a number of different substrates. This chain is Energy-coupling factor transporter ATP-binding protein EcfA1, found in Clostridium perfringens (strain ATCC 13124 / DSM 756 / JCM 1290 / NCIMB 6125 / NCTC 8237 / Type A).